A 261-amino-acid polypeptide reads, in one-letter code: Carnitinyl-CoA dehydratase (261 aa).

Glu111 (nucleophile) is an active-site residue. Glu131 (proton acceptor) is an active-site residue.

This sequence belongs to the enoyl-CoA hydratase/isomerase family.

The enzyme catalyses (R)-carnitinyl-CoA = crotonobetainyl-CoA + H2O. The protein operates within amine and polyamine metabolism; carnitine metabolism. In terms of biological role, catalyzes the reversible dehydration of L-carnitinyl-CoA to crotonobetainyl-CoA. This is Carnitinyl-CoA dehydratase from Escherichia coli (strain ATCC 8739 / DSM 1576 / NBRC 3972 / NCIMB 8545 / WDCM 00012 / Crooks).